The primary structure comprises 291 residues: F-box protein PP2-A12 (291 aa).

Residues 25–71 (KPGLGDLPEACVAIIVENLDPVEICRFSKLNRAFRGASWADCVWESK) form the F-box domain.

This is F-box protein PP2-A12 (P2A12) from Arabidopsis thaliana (Mouse-ear cress).